The sequence spans 135 residues: Small ribosomal subunit protein bS6 (135 aa).

A disordered region spans residues 99–135 (EKSAMLSHLDRNAHAGQDEERSRSPRRQRENAIERVE).

It belongs to the bacterial ribosomal protein bS6 family.

Functionally, binds together with bS18 to 16S ribosomal RNA. The protein is Small ribosomal subunit protein bS6 of Bartonella tribocorum (strain CIP 105476 / IBS 506).